The primary structure comprises 239 residues: ATP-dependent dethiobiotin synthetase BioD (239 aa).

15–20 (EIGKTF) lines the ATP pocket. Mg(2+) is bound at residue Thr-19. Lys-40 is a catalytic residue. Residues Asp-57, 118–121 (EGVG), and 178–179 (NH) each bind ATP. Asp-57 and Glu-118 together coordinate Mg(2+).

The protein belongs to the dethiobiotin synthetase family. In terms of assembly, homodimer. Mg(2+) serves as cofactor.

It localises to the cytoplasm. It catalyses the reaction (7R,8S)-7,8-diammoniononanoate + CO2 + ATP = (4R,5S)-dethiobiotin + ADP + phosphate + 3 H(+). Its pathway is cofactor biosynthesis; biotin biosynthesis; biotin from 7,8-diaminononanoate: step 1/2. Catalyzes a mechanistically unusual reaction, the ATP-dependent insertion of CO2 between the N7 and N8 nitrogen atoms of 7,8-diaminopelargonic acid (DAPA, also called 7,8-diammoniononanoate) to form a ureido ring. This chain is ATP-dependent dethiobiotin synthetase BioD, found in Burkholderia cenocepacia (strain HI2424).